The chain runs to 799 residues: Cadherin-8 (799 aa).

Positions 1 to 29 are cleaved as a signal peptide; it reads MPERLAETLLDLWTPLIILWITLPSFVYM. A propeptide spanning residues 30–61 is cleaved from the precursor; that stretch reads APMNQAHVLTTGSPLELSRQSEEMRILNRSKR. 5 consecutive Cadherin domains span residues 62 to 167, 168 to 276, 277 to 391, 392 to 494, and 495 to 616; these read GWVW…APEF, LNGP…PPKF, AQSL…PPVF, SSPT…DNAP, and EFAS…YVLP. At 62-621 the chain is on the extracellular side; it reads GWVWNQMFVL…PYVLPIGLSM (560 aa). Residue Asn188 is glycosylated (N-linked (GlcNAc...) asparagine). 3 N-linked (GlcNAc...) asparagine glycosylation sites follow: Asn463, Asn473, and Asn544. A helical membrane pass occupies residues 622 to 642; that stretch reads GALIAILACIILLLVIVVLFV. At 643-799 the chain is on the cytoplasmic side; sequence TLRRHKNEPL…YSVGESDKET (157 aa). The residue at position 795 (Ser795) is a Phosphoserine.

The protein localises to the cell membrane. Its function is as follows. Cadherins are calcium-dependent cell adhesion proteins. They preferentially interact with themselves in a homophilic manner in connecting cells; cadherins may thus contribute to the sorting of heterogeneous cell types. The protein is Cadherin-8 (Cdh8) of Rattus norvegicus (Rat).